The primary structure comprises 210 residues: MAEPRRKKRPSKLQDTLVYGLVWLACFAPLAWLAWRGYAGELGANPIDKLIRELGEWGLRLLLVGLAITPAARILKMPRLVRFRRTVGLFAFAYVALHLLAYVGIDLFFDWNQLWKDILKRPFITLGMLGFMLLIPLAVTSTNGWVIRMGRAAWSRLHRLVYLIVPLGVAHYYLLVKADHRPPIIYGAVFVALMLWRVWEGRRTASKSSP.

The next 4 helical transmembrane spans lie at 15 to 35 (DTLV…WLAW), 89 to 109 (LFAF…DLFF), 122 to 142 (PFIT…VTST), and 160 to 180 (LVYL…KADH).

Belongs to the MsrQ family. Heterodimer of a catalytic subunit (MsrP) and a heme-binding subunit (MsrQ). FMN is required as a cofactor. Heme b serves as cofactor.

It localises to the cell inner membrane. Part of the MsrPQ system that repairs oxidized periplasmic proteins containing methionine sulfoxide residues (Met-O), using respiratory chain electrons. Thus protects these proteins from oxidative-stress damage caused by reactive species of oxygen and chlorine generated by the host defense mechanisms. MsrPQ is essential for the maintenance of envelope integrity under bleach stress, rescuing a wide series of structurally unrelated periplasmic proteins from methionine oxidation. MsrQ provides electrons for reduction to the reductase catalytic subunit MsrP, using the quinone pool of the respiratory chain. The protein is Protein-methionine-sulfoxide reductase heme-binding subunit MsrQ of Caulobacter vibrioides (strain ATCC 19089 / CIP 103742 / CB 15) (Caulobacter crescentus).